We begin with the raw amino-acid sequence, 147 residues long: Large ribosomal subunit protein bL9 (147 aa).

It belongs to the bacterial ribosomal protein bL9 family.

In terms of biological role, binds to the 23S rRNA. The polypeptide is Large ribosomal subunit protein bL9 (Mesoplasma florum (strain ATCC 33453 / NBRC 100688 / NCTC 11704 / L1) (Acholeplasma florum)).